The chain runs to 173 residues: Large ribosomal subunit protein uL29c (173 aa).

The N-terminal 60 residues, 1–60 (MLSLSIATPGTAAIFRRGTASATSTSSSFHGVRIQHQVSARVPAAATISSSSPKPSVVMM), are a transit peptide targeting the chloroplast. A disordered region spans residues 143–173 (KKSIVPRPPPSLKKLQEEEAAEEAAEAAKSA). Position 172 is a phosphoserine (Ser172).

This sequence belongs to the universal ribosomal protein uL29 family. In terms of assembly, part of the 50S ribosomal subunit.

It is found in the plastid. The protein resides in the chloroplast. The sequence is that of Large ribosomal subunit protein uL29c (RPL29) from Arabidopsis thaliana (Mouse-ear cress).